A 465-amino-acid chain; its full sequence is Crh-like protein ARB_05253 (465 aa).

The first 21 residues, 1–21, serve as a signal peptide directing secretion; sequence MKLSLAAALLGALAVSAQTST. Positions 22–223 constitute a GH16 domain; sequence ECNPLKQKCP…WAGGETDFSK (202 aa). Cysteines 23 and 30 form a disulfide. The active-site Nucleophile is E114. E118 serves as the catalytic Proton donor. Positions 118, 200, and 211 each coordinate chitin. Disordered regions lie at residues 261 to 325 and 339 to 442; these read GQVN…STMT and TGTG…PGST. Residue N264 is glycosylated (N-linked (GlcNAc...) asparagine). A compositionally biased stretch (low complexity) spans 277–287; sequence SSTLPSSPSTS. Positions 304-325 are enriched in polar residues; it reads QAPNTGSSPSNTLTNGPSSTMT. 3 stretches are compositionally biased toward low complexity: residues 339–348, 361–376, and 383–397; these read TGTGGVVTPT, TSRS…SASS, and MTTS…TGTG. A lipid anchor (GPI-anchor amidated serine) is attached at S441. Positions 442-465 are cleaved as a propeptide — removed in mature form; it reads TGAIHSVSNALLLSFCAIAAWALV.

This sequence belongs to the glycosyl hydrolase 16 family. CRH1 subfamily. In terms of processing, the GPI-anchor is attached to the protein in the endoplasmic reticulum and serves to target the protein to the cell surface. There, the glucosamine-inositol phospholipid moiety is cleaved off and the GPI-modified mannoprotein is covalently attached via its lipidless GPI glycan remnant to the 1,6-beta-glucan of the outer cell wall layer.

Its subcellular location is the secreted. It is found in the cell wall. It localises to the membrane. The enzyme catalyses Random endo-hydrolysis of N-acetyl-beta-D-glucosaminide (1-&gt;4)-beta-linkages in chitin and chitodextrins.. Functionally, dual chitinase/transglycosylase that plays a role in cell wall architecture. Chitinase and transglycosylase activities are coupled. Required for the polysaccharide cross-linking at the septa and the cell wall. More specifically, transfers chitin to 1,6-beta-glucan in the cell wall. This chain is Crh-like protein ARB_05253, found in Arthroderma benhamiae (strain ATCC MYA-4681 / CBS 112371) (Trichophyton mentagrophytes).